Reading from the N-terminus, the 188-residue chain is Elongation factor P (188 aa).

The protein belongs to the elongation factor P family.

The protein resides in the cytoplasm. It functions in the pathway protein biosynthesis; polypeptide chain elongation. Functionally, involved in peptide bond synthesis. Stimulates efficient translation and peptide-bond synthesis on native or reconstituted 70S ribosomes in vitro. Probably functions indirectly by altering the affinity of the ribosome for aminoacyl-tRNA, thus increasing their reactivity as acceptors for peptidyl transferase. This chain is Elongation factor P (efp), found in Ureaplasma parvum serovar 3 (strain ATCC 700970).